Consider the following 891-residue polypeptide: DNA mismatch repair protein MutS (891 aa).

Residue 634 to 641 (GPNMGGKS) coordinates ATP.

Belongs to the DNA mismatch repair MutS family.

This protein is involved in the repair of mismatches in DNA. It is possible that it carries out the mismatch recognition step. This protein has a weak ATPase activity. In Burkholderia pseudomallei (strain 1106a), this protein is DNA mismatch repair protein MutS.